The sequence spans 652 residues: Acetyl-coenzyme A synthetase (652 aa).

Residues 189-192 (RGGK) and Ser311 contribute to the CoA site. Residues 387–389 (GEP), 411–416 (DTWWQT), Asp500, and Arg515 each bind ATP. Ser523 lines the CoA pocket. Arg526 is a binding site for ATP. Residues Val537, His539, and Ile542 each coordinate Mg(2+). Lys584 serves as a coordination point for CoA. An N6-acetyllysine modification is found at Lys609.

It belongs to the ATP-dependent AMP-binding enzyme family. The cofactor is Mg(2+). Post-translationally, acetylated. Deacetylation by the SIR2-homolog deacetylase activates the enzyme.

It catalyses the reaction acetate + ATP + CoA = acetyl-CoA + AMP + diphosphate. In terms of biological role, catalyzes the conversion of acetate into acetyl-CoA (AcCoA), an essential intermediate at the junction of anabolic and catabolic pathways. AcsA undergoes a two-step reaction. In the first half reaction, AcsA combines acetate with ATP to form acetyl-adenylate (AcAMP) intermediate. In the second half reaction, it can then transfer the acetyl group from AcAMP to the sulfhydryl group of CoA, forming the product AcCoA. This is Acetyl-coenzyme A synthetase from Bartonella quintana (strain Toulouse) (Rochalimaea quintana).